The following is a 193-amino-acid chain: Dual-action ribosomal maturation protein DarP (193 aa).

The protein belongs to the DarP family.

It localises to the cytoplasm. In terms of biological role, member of a network of 50S ribosomal subunit biogenesis factors which assembles along the 30S-50S interface, preventing incorrect 23S rRNA structures from forming. Promotes peptidyl transferase center (PTC) maturation. The polypeptide is Dual-action ribosomal maturation protein DarP (Vibrio cholerae serotype O1 (strain ATCC 39315 / El Tor Inaba N16961)).